Reading from the N-terminus, the 452-residue chain is CUGBP Elav-like family member 3 (452 aa).

3 RRM domains span residues 7–88 (IKLF…PADS), 94–174 (RKLF…FADT), and 367–445 (CNIF…LKRP).

This sequence belongs to the CELF/BRUNOL family.

Its subcellular location is the nucleus. The protein localises to the cytoplasm. Functionally, RNA-binding protein that may be involved in the regulation of pre-mRNA alternative splicing. In Danio rerio (Zebrafish), this protein is CUGBP Elav-like family member 3 (celf3).